Consider the following 578-residue polypeptide: Proteasome-associated ATPase (578 aa).

Positions 35-84 form a coiled coil; that stretch reads RHLTALEEQLGAARTRLAQVSAQNDRLATTLREARDQIVALKAEVDRLGQ. 266 to 271 contacts ATP; that stretch reads GCGKTL. A docks into pockets in the proteasome alpha-ring region spans residues 577–578; sequence YL.

The protein belongs to the AAA ATPase family. Homohexamer. Assembles into a hexameric ring structure that caps the 20S proteasome core. Strongly interacts with the prokaryotic ubiquitin-like protein Pup through a hydrophobic interface; the interacting region of ARC lies in its N-terminal coiled-coil domain. There is one Pup binding site per ARC hexamer ring. Upon ATP-binding, the C-terminus of ARC interacts with the alpha-rings of the proteasome core, possibly by binding to the intersubunit pockets.

Its pathway is protein degradation; proteasomal Pup-dependent pathway. Its function is as follows. ATPase which is responsible for recognizing, binding, unfolding and translocation of pupylated proteins into the bacterial 20S proteasome core particle. May be essential for opening the gate of the 20S proteasome via an interaction with its C-terminus, thereby allowing substrate entry and access to the site of proteolysis. Thus, the C-termini of the proteasomal ATPase may function like a 'key in a lock' to induce gate opening and therefore regulate proteolysis. This is Proteasome-associated ATPase from Kineococcus radiotolerans (strain ATCC BAA-149 / DSM 14245 / SRS30216).